The primary structure comprises 1412 residues: Sister chromatid cohesion protein PDS5 homolog B (1412 aa).

The stretch at 383–419 (LLVNDHLLNFVRERTLDKRWRVRKEAMMGLAQIYKKY) is one HEAT repeat. Residues 1137 to 1412 (PLSSAGKQSQ…RRRTSKRERR (276 aa)) form a disordered region. 2 stretches are compositionally biased toward low complexity: residues 1139–1149 (SSAGKQSQSKS) and 1156–1167 (SNASSSSNPSSP). Composition is skewed to basic and acidic residues over residues 1172–1184 (GRLD…HSEN), 1196–1212 (KKTD…LEKP), 1223–1241 (SEEK…DQKL), and 1263–1272 (QEEKRLKEDV). Positions 1322-1331 (VEEEEEEEER) are enriched in acidic residues. Over residues 1350–1362 (RTQQSRAGRSKQA) the composition is skewed to polar residues. Acidic residues predominate over residues 1386-1397 (VPQEEVMEEEEV). A compositionally biased stretch (basic residues) spans 1402–1412 (VRRRTSKRERR).

Interacts with the cohesin complex.

It is found in the nucleus. Its function is as follows. Plays a role in androgen-induced proliferative arrest. Required for maintenance of sister chromatid cohesion during mitosis. The polypeptide is Sister chromatid cohesion protein PDS5 homolog B (PDS5B) (Gallus gallus (Chicken)).